A 2944-amino-acid chain; its full sequence is Collagen alpha-1(VII) chain (2944 aa).

An N-terminal signal peptide occupies residues 1–24; it reads MRLRLLVAALCAAEILMGAPEVWA. The nonhelical region (NC1) stretch occupies residues 18 to 1254; sequence GAPEVWAQPR…TGPCAVHCPK (1237 aa). The 174-residue stretch at 39–212 folds into the VWFA 1 domain; it reads DIVFLLDGSS…SILRTLLPLI (174 aa). 9 Fibronectin type-III domains span residues 235–330, 331–417, 418–508, 511–598, 601–688, 689–776, 779–867, 870–957, and 959–1053; these read GPRD…TAKE, GLEL…TASS, VEQT…LEQL, PVMN…DPEA, VVPG…DPLG, PVRR…APEP, SVSK…PPAT, LLET…EPSH, and PSTE…SHGP. An N-linked (GlcNAc...) asparagine glycan is attached at asparagine 338. Asparagine 787 is a glycosylation site (N-linked (GlcNAc...) asparagine). The VWFA 2 domain occupies 1055 to 1230; it reads DVVFLLHATR…PGLDRAVSDL (176 aa). The N-linked (GlcNAc...) asparagine glycan is linked to asparagine 1110. Positions 1171–1173 match the Cell attachment site motif; sequence RGD. Residues 1255-1475 form an interrupted collagenous region region; it reads GQKGEPGVTG…GLRGAPGMTG (221 aa). The segment at 1255 to 2775 is triple-helical region; that stretch reads GQKGEPGVTG…GPRGEKGEAA (1521 aa). Disordered regions lie at residues 1259-1934 and 1960-2773; these read EPGV…GSLP and SSGS…EKGE. Positions 1338 to 1352 are enriched in low complexity; sequence RGPQGPKGEPGEPGQ. Gly residues predominate over residues 1353 to 1363; that stretch reads ITGGGGPGFPG. Composition is skewed to basic and acidic residues over residues 1397-1406 and 1439-1448; these read KGDKGDRGER and PGEKGEKGDC. Residues 1507–1518 show a composition bias toward low complexity; it reads PGAAGHPGVEGP. Composition is skewed to basic and acidic residues over residues 1527–1536, 1627–1639, and 1666–1680; these read RRGEKGEPGR, RGRD…KGDE, and VGEK…EDGR. The segment covering 1813-1822 has biased composition (pro residues); it reads PPGPPGPPGV. 3 stretches are compositionally biased toward basic and acidic residues: residues 1846–1855, 1862–1871, and 1968–1984; these read EDGRKGEKGD, EGPDGPKGER, and PERR…RGPP. Positions 2002 to 2004 match the Cell attachment site motif; that stretch reads RGD. Residues 2040-2049 show a composition bias toward gly residues; sequence GRAGGSGEAG. Positions 2050–2068 are enriched in basic and acidic residues; that stretch reads RPGERGERGEKGERGDQGR. A Cell attachment site motif is present at residues 2063–2065; that stretch reads RGD. Residues 2074–2083 are compositionally biased toward pro residues; it reads LPGPPGPPGP. Over residues 2130 to 2140 the composition is skewed to basic and acidic residues; sequence DVGEPGKRGHD. Residues proline 2158, proline 2167, proline 2176, and proline 2179 each carry the 4-hydroxyproline modification. Composition is skewed to low complexity over residues 2182 to 2197, 2226 to 2241, 2279 to 2299, and 2306 to 2317; these read PGLA…SGLK, SGLV…PGQV, PKGE…PPGA, and PGDLAGALLGEP. Residues 2319–2335 are compositionally biased toward basic and acidic residues; that stretch reads AKGDRGLPGPRGEKGEA. The span at 2414 to 2427 shows a compositional bias: low complexity; it reads ERGLAGPPGREGAP. Basic and acidic residues-rich tracts occupy residues 2462–2477 and 2525–2544; these read RGER…DGHP and AKGD…KGPR. Positions 2576-2594 are enriched in low complexity; it reads PKGEPGAAGIPGEPGAPGK. A Cell attachment site motif is present at residues 2601–2603; that stretch reads RGD. Residues 2615-2636 are compositionally biased toward basic and acidic residues; it reads LKGEKGIKGTCGRDGERGDKGE. A 5-hydroxylysine mark is found at lysine 2616 and lysine 2622. Positions 2631 to 2633 match the Cell attachment site motif; that stretch reads RGD. 4-hydroxyproline is present on residues proline 2655, proline 2658, and proline 2664. Over residues 2695 to 2704 the composition is skewed to gly residues; it reads GPPGVGGFPG. Residues 2776 to 2944 form a nonhelical region (NC2) region; it reads LTEDDIRDFV…GVHSQKTGAA (169 aa). The BPTI/Kunitz inhibitor domain occupies 2879–2931; that stretch reads CSLPLDEGSCTAYTLRWYHRAVPGGTACHPFVYGGCGGNANRFGTREACERRC. 3 cysteine pairs are disulfide-bonded: cysteine 2879–cysteine 2931, cysteine 2888–cysteine 2914, and cysteine 2906–cysteine 2927.

Homotrimer. Interacts with MIA3/TANGO1; facilitating its loading into transport carriers and subsequent secretion. In terms of processing, prolines at the third position of the tripeptide repeating unit (G-X-Y) are hydroxylated in some or all of the chains.

Its subcellular location is the secreted. The protein resides in the extracellular space. It is found in the extracellular matrix. The protein localises to the basement membrane. In terms of biological role, stratified squamous epithelial basement membrane protein that forms anchoring fibrils which may contribute to epithelial basement membrane organization and adherence by interacting with extracellular matrix (ECM) proteins such as type IV collagen. This is Collagen alpha-1(VII) chain from Mus musculus (Mouse).